Reading from the N-terminus, the 200-residue chain is Recombination protein RecR (200 aa).

A C4-type zinc finger spans residues 58–75 (CSNCFCLKISQTSPCNFC). The region spanning 82–177 (SSLCIVATPK…KISRLALGMP (96 aa)) is the Toprim domain.

Belongs to the RecR family.

May play a role in DNA repair. It seems to be involved in an RecBC-independent recombinational process of DNA repair. It may act with RecF and RecO. In Chlamydia trachomatis serovar L2 (strain ATCC VR-902B / DSM 19102 / 434/Bu), this protein is Recombination protein RecR.